Reading from the N-terminus, the 363-residue chain is Putative dipeptidase YkvY (363 aa).

Mn(2+) contacts are provided by Asp222, Asp233, His297, Glu326, and Glu340.

The protein belongs to the peptidase M24B family. Mn(2+) serves as cofactor.

The chain is Putative dipeptidase YkvY (ykvY) from Bacillus subtilis (strain 168).